The chain runs to 471 residues: Glutamate--tRNA ligase (471 aa).

The short motif at 9 to 19 is the 'HIGH' region element; the sequence is PSPTGYLHVGG. Positions 98, 100, 125, and 127 each coordinate Zn(2+). The 'KMSKS' region motif lies at 237–241; sequence KLSKR. An ATP-binding site is contributed by lysine 240.

Belongs to the class-I aminoacyl-tRNA synthetase family. Glutamate--tRNA ligase type 1 subfamily. Monomer. Zn(2+) is required as a cofactor.

The protein resides in the cytoplasm. The enzyme catalyses tRNA(Glu) + L-glutamate + ATP = L-glutamyl-tRNA(Glu) + AMP + diphosphate. In terms of biological role, catalyzes the attachment of glutamate to tRNA(Glu) in a two-step reaction: glutamate is first activated by ATP to form Glu-AMP and then transferred to the acceptor end of tRNA(Glu). This Shigella boydii serotype 18 (strain CDC 3083-94 / BS512) protein is Glutamate--tRNA ligase.